The sequence spans 151 residues: Ribosome maturation factor RimP (151 aa).

It belongs to the RimP family.

The protein localises to the cytoplasm. In terms of biological role, required for maturation of 30S ribosomal subunits. The protein is Ribosome maturation factor RimP of Mannheimia succiniciproducens (strain KCTC 0769BP / MBEL55E).